The following is a 139-amino-acid chain: MGETVRFGVSLDEDLLNKFDKLCDRQGYPSRSEALRDMIRQALAKDILQSKDSNAAGVLSLVYDHHTRELSRKLIERQHEMYDSIIATLHIHLDRYNCLEVLIIKGNGGKIQQLADMLCSIRGVKLGAFSFLPVEEDVF.

Residues histidine 79, histidine 90, histidine 92, and cysteine 98 each coordinate Ni(2+).

The protein belongs to the transcriptional regulatory CopG/NikR family. Ni(2+) is required as a cofactor.

Transcriptional regulator. The chain is Putative nickel-responsive regulator from Lawsonia intracellularis (strain PHE/MN1-00).